The sequence spans 675 residues: NADH-ubiquinone oxidoreductase chain 5 (675 aa).

The next 19 helical transmembrane spans lie at 3–23, 27–47, 75–95, 108–127, 132–154, 177–197, 211–231, 251–271, 284–304, 311–329, 334–354, 380–400, 413–433, 462–482, 519–539, 564–584, 593–613, 624–644, and 649–669; these read LLPLLFPLLNLFISCILGKFL, VLFVLVINMLFSAIFSFWIFY, FLFDSITSVMLVLVVFVSLLV, HIIRFLGYLSLFTFFMLMLV, FVQLFLGWEGVGLSSYLLINFWY, IYFSLLVIFFFFKSFDFGVVF, FLGFSLNRVDLIVIFLFLGAI, TPVSALIHAATMVTAGVFVLI, LFLVSLIGGLTALFAGTVGLV, VIAYSTCSQLGYMFFACGM, VGLFHLFNHGFFKALLFLGAG, YVAILVGSLSLTGFPFLTGFY, FSINSFFIYWLGVFAAFITSF, SFIFYVLAFLGFLSIFIGFIF, LIPLVFSIVGLFFSLFVYFVI, YFDLLYNNIFVFNLLSSFYLL, LIELFGPLSFVRLINKSSIIF, YIFVVLLGLMFFIKLTSSLFF, and SFFNFGLFICLLSLIIFLSFG.

The protein belongs to the complex I subunit 5 family.

It localises to the mitochondrion inner membrane. The enzyme catalyses a ubiquinone + NADH + 5 H(+)(in) = a ubiquinol + NAD(+) + 4 H(+)(out). Its function is as follows. Core subunit of the mitochondrial membrane respiratory chain NADH dehydrogenase (Complex I) that is believed to belong to the minimal assembly required for catalysis. Complex I functions in the transfer of electrons from NADH to the respiratory chain. The immediate electron acceptor for the enzyme is believed to be ubiquinone. The sequence is that of NADH-ubiquinone oxidoreductase chain 5 (ND5) from Acanthamoeba castellanii (Amoeba).